The chain runs to 169 residues: Protein AIG2 B (169 aa).

A substrate-binding site is contributed by 15 to 20 (YGSFQE). Glu-83 functions as the Proton acceptor in the catalytic mechanism.

The protein belongs to the gamma-glutamylcyclotransferase family. Expressed in roots, leaves and stems.

Its function is as follows. Putative gamma-glutamylcyclotransferase. This Arabidopsis thaliana (Mouse-ear cress) protein is Protein AIG2 B.